We begin with the raw amino-acid sequence, 94 residues long: Long neurotoxin-like OH-31 (94 aa).

Positions 1-19 (MKTLLLTLVVVTILCLDLG) are cleaved as a signal peptide. Cystine bridges form between cysteine 35–cysteine 55, cysteine 37–cysteine 66, cysteine 70–cysteine 81, and cysteine 82–cysteine 87.

The protein belongs to the three-finger toxin family. Long-chain subfamily. Type II alpha-neurotoxin sub-subfamily. Expressed by the venom gland.

Its subcellular location is the secreted. In terms of biological role, binds with high affinity to muscular nicotinic acetylcholine receptors (nAChRs), whereas it binds with a low affinity to neuronal alpha-7/CHRNA7 nAChRs. This chain is Long neurotoxin-like OH-31, found in Ophiophagus hannah (King cobra).